Consider the following 167-residue polypeptide: MKKVFITTGTEHYLRQLMANYTGGNVTLLQNFSQSLLYQESTGEKLFQEGAEYRVLQSSGSIKGFGVVVFEYIHLRDEEIPIFLQMYQRASLHFSETPGLQSTKLTKAMNMNKFLIISFWDSEVFFHDWKKSPLSKEITNIMRKNNTQSGFSHEDIYHYPEFSHDAK.

The tract at residues 1–50 is important for catalysis; the sequence is MKKVFITTGTEHYLRQLMANYTGGNVTLLQNFSQSLLYQESTGEKLFQEG. An ABM domain is found at 67 to 154; it reads VVVFEYIHLR…NNTQSGFSHE (88 aa).

It belongs to the antibiotic biosynthesis monooxygenase family. As to quaternary structure, monomer.

Its subcellular location is the cytoplasm. In terms of biological role, catalyzes the degradation of heme to biliverdin in the presence of a suitable electron donor such as ascorbate, with the subsequent release of iron. Hardly any CO is released by the heme degradation reaction. Binds heme. Allows bacterial pathogens to use the host heme as an iron source. Release of iron from heme may play a crucial role in the pathogenicity of L.monocytogenes. In Listeria monocytogenes serovar 1/2a (strain ATCC BAA-679 / EGD-e), this protein is Heme-degrading monooxygenase.